The chain runs to 459 residues: Argininosuccinate lyase (459 aa).

The protein belongs to the lyase 1 family. Argininosuccinate lyase subfamily.

It is found in the cytoplasm. It carries out the reaction 2-(N(omega)-L-arginino)succinate = fumarate + L-arginine. It functions in the pathway amino-acid biosynthesis; L-arginine biosynthesis; L-arginine from L-ornithine and carbamoyl phosphate: step 3/3. This chain is Argininosuccinate lyase, found in Methylobacterium radiotolerans (strain ATCC 27329 / DSM 1819 / JCM 2831 / NBRC 15690 / NCIMB 10815 / 0-1).